The primary structure comprises 399 residues: Elongation factor Tu (399 aa).

The 200-residue stretch at 10 to 209 folds into the tr-type G domain; it reads KPHVNIGTIG…DVDEYIPTPV (200 aa). The tract at residues 19–26 is G1; it reads GHVDHGKT. 19 to 26 provides a ligand contact to GTP; it reads GHVDHGKT. Position 26 (threonine 26) interacts with Mg(2+). The segment at 62 to 66 is G2; sequence GITIN. Residues 83–86 are G3; the sequence is DCPG. GTP contacts are provided by residues 83-87 and 138-141; these read DCPGH and NKCD. The interval 138 to 141 is G4; the sequence is NKCD. A G5 region spans residues 175-177; the sequence is SAY.

It belongs to the TRAFAC class translation factor GTPase superfamily. Classic translation factor GTPase family. EF-Tu/EF-1A subfamily. In terms of assembly, monomer.

The protein localises to the cytoplasm. It catalyses the reaction GTP + H2O = GDP + phosphate + H(+). In terms of biological role, GTP hydrolase that promotes the GTP-dependent binding of aminoacyl-tRNA to the A-site of ribosomes during protein biosynthesis. This is Elongation factor Tu from Bifidobacterium animalis subsp. lactis (strain AD011).